A 203-amino-acid polypeptide reads, in one-letter code: Ribosomal RNA small subunit methyltransferase G (203 aa).

S-adenosyl-L-methionine is bound by residues G73, L78, 124–125 (VE), and R138.

This sequence belongs to the methyltransferase superfamily. RNA methyltransferase RsmG family.

It is found in the cytoplasm. It catalyses the reaction guanosine(527) in 16S rRNA + S-adenosyl-L-methionine = N(7)-methylguanosine(527) in 16S rRNA + S-adenosyl-L-homocysteine. Specifically methylates the N7 position of guanine in position 527 of 16S rRNA. This chain is Ribosomal RNA small subunit methyltransferase G, found in Haemophilus ducreyi (strain 35000HP / ATCC 700724).